Consider the following 255-residue polypeptide: tRNA (guanine-N(7)-)-methyltransferase (255 aa).

The interval 1-37 (MTAAASDPHNPRSSADDTASPRCESGQGSFFGRRKGH) is disordered. S-adenosyl-L-methionine is bound by residues E80, E105, D132, and D154. D154 is an active-site residue. K158 and D190 together coordinate substrate.

This sequence belongs to the class I-like SAM-binding methyltransferase superfamily. TrmB family.

The catalysed reaction is guanosine(46) in tRNA + S-adenosyl-L-methionine = N(7)-methylguanosine(46) in tRNA + S-adenosyl-L-homocysteine. It functions in the pathway tRNA modification; N(7)-methylguanine-tRNA biosynthesis. Functionally, catalyzes the formation of N(7)-methylguanine at position 46 (m7G46) in tRNA. The sequence is that of tRNA (guanine-N(7)-)-methyltransferase from Nitrobacter hamburgensis (strain DSM 10229 / NCIMB 13809 / X14).